We begin with the raw amino-acid sequence, 238 residues long: uncharacterized protein (238 aa).

This is an uncharacterized protein from Haemophilus influenzae (strain ATCC 51907 / DSM 11121 / KW20 / Rd).